A 178-amino-acid polypeptide reads, in one-letter code: Large ribosomal subunit protein uL5 (178 aa).

The protein belongs to the universal ribosomal protein uL5 family. Part of the 50S ribosomal subunit; part of the 5S rRNA/L5/L18/L25 subcomplex. Contacts the 5S rRNA and the P site tRNA. Forms a bridge to the 30S subunit in the 70S ribosome.

This is one of the proteins that bind and probably mediate the attachment of the 5S RNA into the large ribosomal subunit, where it forms part of the central protuberance. In the 70S ribosome it contacts protein S13 of the 30S subunit (bridge B1b), connecting the 2 subunits; this bridge is implicated in subunit movement. Contacts the P site tRNA; the 5S rRNA and some of its associated proteins might help stabilize positioning of ribosome-bound tRNAs. This Syntrophomonas wolfei subsp. wolfei (strain DSM 2245B / Goettingen) protein is Large ribosomal subunit protein uL5.